The primary structure comprises 56 residues: Ovomucoid (56 aa).

A Kazal-like domain is found at 6-56 (VDCSEYPKPACMSEYRPLCGSDNKTYVNKCNFCNAVVESNGTLTLSHFGKC). 3 disulfide bridges follow: Cys-8–Cys-38, Cys-16–Cys-35, and Cys-24–Cys-56. A glycan (N-linked (GlcNAc...) asparagine) is linked at Asn-45.

The protein resides in the secreted. This Colinus virginianus (Northern bobwhite) protein is Ovomucoid.